The chain runs to 162 residues: NADPH-dependent 7-cyano-7-deazaguanine reductase (162 aa).

The Thioimide intermediate role is filled by cysteine 53. Catalysis depends on aspartate 60, which acts as the Proton donor. Residues 75–77 and 94–95 each bind substrate; these read VES and HE.

It belongs to the GTP cyclohydrolase I family. QueF type 1 subfamily.

It localises to the cytoplasm. It carries out the reaction 7-aminomethyl-7-carbaguanine + 2 NADP(+) = 7-cyano-7-deazaguanine + 2 NADPH + 3 H(+). The protein operates within tRNA modification; tRNA-queuosine biosynthesis. In terms of biological role, catalyzes the NADPH-dependent reduction of 7-cyano-7-deazaguanine (preQ0) to 7-aminomethyl-7-deazaguanine (preQ1). This Exiguobacterium sp. (strain ATCC BAA-1283 / AT1b) protein is NADPH-dependent 7-cyano-7-deazaguanine reductase.